Consider the following 325-residue polypeptide: Protease HtpX homolog 2 (325 aa).

A run of 2 helical transmembrane segments spans residues 17 to 37 (IAILVLGFALIYGILGYFFGF) and 42 to 62 (LLITGALAFVTIFTILQWLFG). His-146 contacts Zn(2+). Glu-147 is an active-site residue. Position 150 (His-150) interacts with Zn(2+). Transmembrane regions (helical) follow at residues 158–178 (LLLAVGLIPTLLYWIGYGLWW) and 195–215 (ILFLIGIALIAFSFLFNLFVL). Glu-222 lines the Zn(2+) pocket.

This sequence belongs to the peptidase M48B family. Zn(2+) is required as a cofactor.

The protein resides in the cell membrane. The polypeptide is Protease HtpX homolog 2 (Sulfurisphaera tokodaii (strain DSM 16993 / JCM 10545 / NBRC 100140 / 7) (Sulfolobus tokodaii)).